Reading from the N-terminus, the 382-residue chain is ATP phosphoribosyltransferase regulatory subunit (382 aa).

The protein belongs to the class-II aminoacyl-tRNA synthetase family. HisZ subfamily. As to quaternary structure, heteromultimer composed of HisG and HisZ subunits.

It localises to the cytoplasm. It participates in amino-acid biosynthesis; L-histidine biosynthesis; L-histidine from 5-phospho-alpha-D-ribose 1-diphosphate: step 1/9. Its function is as follows. Required for the first step of histidine biosynthesis. May allow the feedback regulation of ATP phosphoribosyltransferase activity by histidine. The protein is ATP phosphoribosyltransferase regulatory subunit of Albidiferax ferrireducens (strain ATCC BAA-621 / DSM 15236 / T118) (Rhodoferax ferrireducens).